The following is a 346-amino-acid chain: MRRLGLSLHHDTSPSFAALACNQRPPPNGTVHACSKSRPPQLEPGKVGKKPIKKTMRIARIPTSIPPHLRLPLDLSAVSPMGSASEHDVREHLLDVDGVGEEGAAAAAGPKIRVRGLTRRSEARGEEILRGVDLDVPRGVVVGVIGPSGSGKSTLLRALNRLWEPAPGAVLLDGVDICGIDVLALRRKVGMLFQLPAMFDGTVADNVRYGPQLQGKKLTDAEVQSLLSLADLDPALCSKPASELSVGQAQRVALARTLANDPEVLLLDEPTSALDPISTQNIEEAIVRLKKTRGLTTVMVSHSVKQIQRIADLVCLLVAGEVVEVLPPSELSEAKHPMARRFLELS.

The disordered stretch occupies residues 23–48 (QRPPPNGTVHACSKSRPPQLEPGKVG). The ABC transporter domain occupies 112–344 (IRVRGLTRRS…KHPMARRFLE (233 aa)). ATP is bound at residue 146–153 (GPSGSGKS).

It belongs to the ABC transporter superfamily. ABCI family. In terms of assembly, interacts with STAR2. In terms of tissue distribution, expressed in roots.

It is found in the membrane. Associates with STAR2 to form a functional transmembrane ABC transporter required for detoxification of aluminum (Al) in roots. Can specifically transport UDP-glucose. The chain is Protein STAR1 from Oryza sativa subsp. japonica (Rice).